The primary structure comprises 352 residues: MARGRKMSKPRAVEAAAAAAAVAATAPGPEMVERRGPGRPRTNGENVFTGQSKIYTYMSPNKCSGMRSPLQEENSVAQYEVKCQGKPLAGIYRKRDEKRNSGNAIRSSMKAEEQKIKDARRGPLAPFPNQKSEAAEPPKTPTSSCDTPNAAAAKQGLKKPVRGKQAPRKKAQGKTQQNRKLTDFYPVRRSSRKSKAELQSEERKRIDELIESGKEEGMKIDLIDGKGRGVIATKQFSRGEFVVEYHGDLIEITDAKKREALYAQDPSTGCYMYYFQYLSKTYCVDATRETNRLGRLINHSKCGNCQTKLHDIDGVPHLILIASRDIEAGEELLYDYGDRSRASIEAYPWLKH.

A disordered region spans residues A21–Q51. S59 is subject to Phosphoserine. The interval P87 to E202 is disordered. A compositionally biased stretch (basic and acidic residues) spans M109–R121. Phosphothreonine is present on T140. A compositionally biased stretch (basic residues) spans G156–Q172. Residues E216–G337 form the SET domain. Residues K226–R228, Y271, and N298–H299 each bind S-adenosyl-L-methionine.

It belongs to the class V-like SAM-binding methyltransferase superfamily. Histone-lysine methyltransferase family. PR/SET subfamily. Interacts with L3MBTL1. Interacts with SIRT2 (phosphorylated form); the interaction is direct, stimulates KMT5A-mediated methyltransferase activity at histone H4 'Lys-20' (H4K20me1) and is increased in a H(2)O(2)-induced oxidative stress-dependent manner. Post-translationally, ubiquitinated and degraded by the DCX(DTL) complex.

The protein localises to the nucleus. The protein resides in the chromosome. The enzyme catalyses L-lysyl(20)-[histone H4] + S-adenosyl-L-methionine = N(6)-methyl-L-lysyl(20)-[histone H4] + S-adenosyl-L-homocysteine + H(+). The catalysed reaction is L-lysyl-[protein] + S-adenosyl-L-methionine = N(6)-methyl-L-lysyl-[protein] + S-adenosyl-L-homocysteine + H(+). Its function is as follows. Protein-lysine N-methyltransferase that monomethylates both histones and non-histone proteins. Specifically monomethylates 'Lys-20' of histone H4 (H4K20me1). H4K20me1 is enriched during mitosis and represents a specific tag for epigenetic transcriptional repression. Mainly functions in euchromatin regions, thereby playing a central role in the silencing of euchromatic genes. Required for cell proliferation, probably by contributing to the maintenance of proper higher-order structure of DNA during mitosis. Involved in chromosome condensation and proper cytokinesis. Nucleosomes are preferred as substrate compared to free histones. Mediates monomethylation of p53/TP53 at 'Lys-382', leading to repress p53/TP53-target genes. Plays a negative role in TGF-beta response regulation and a positive role in cell migration. This Bos taurus (Bovine) protein is N-lysine methyltransferase KMT5A.